Here is a 94-residue protein sequence, read N- to C-terminus: UPF0381 protein YfcZ (94 aa).

This sequence belongs to the UPF0381 family.

This is UPF0381 protein YfcZ (yfcZ) from Escherichia coli O6:H1 (strain CFT073 / ATCC 700928 / UPEC).